The primary structure comprises 410 residues: Peptidase T (410 aa).

Histidine 79 provides a ligand contact to Zn(2+). The active site involves aspartate 81. A Zn(2+)-binding site is contributed by aspartate 142. The active-site Proton acceptor is glutamate 176. Zn(2+)-binding residues include glutamate 177, aspartate 199, and histidine 381.

It belongs to the peptidase M20B family. The cofactor is Zn(2+).

It localises to the cytoplasm. It carries out the reaction Release of the N-terminal residue from a tripeptide.. Functionally, cleaves the N-terminal amino acid of tripeptides. This is Peptidase T from Listeria monocytogenes serotype 4b (strain CLIP80459).